A 173-amino-acid polypeptide reads, in one-letter code: Ribosome maturation factor RimM (173 aa).

A PRC barrel domain is found at Glu-90–Ile-169.

The protein belongs to the RimM family. Binds ribosomal protein uS19.

It is found in the cytoplasm. An accessory protein needed during the final step in the assembly of 30S ribosomal subunit, possibly for assembly of the head region. Essential for efficient processing of 16S rRNA. May be needed both before and after RbfA during the maturation of 16S rRNA. It has affinity for free ribosomal 30S subunits but not for 70S ribosomes. In Nitratiruptor sp. (strain SB155-2), this protein is Ribosome maturation factor RimM.